The chain runs to 158 residues: NADH-quinone oxidoreductase subunit B (158 aa).

[4Fe-4S] cluster-binding residues include cysteine 37, cysteine 38, cysteine 102, and cysteine 132.

Belongs to the complex I 20 kDa subunit family. In terms of assembly, NDH-1 is composed of 14 different subunits. Subunits NuoB, C, D, E, F, and G constitute the peripheral sector of the complex. [4Fe-4S] cluster is required as a cofactor.

It localises to the cell inner membrane. The enzyme catalyses a quinone + NADH + 5 H(+)(in) = a quinol + NAD(+) + 4 H(+)(out). Functionally, NDH-1 shuttles electrons from NADH, via FMN and iron-sulfur (Fe-S) centers, to quinones in the respiratory chain. The immediate electron acceptor for the enzyme in this species is believed to be ubiquinone. Couples the redox reaction to proton translocation (for every two electrons transferred, four hydrogen ions are translocated across the cytoplasmic membrane), and thus conserves the redox energy in a proton gradient. This is NADH-quinone oxidoreductase subunit B from Acidithiobacillus ferrooxidans (strain ATCC 23270 / DSM 14882 / CIP 104768 / NCIMB 8455) (Ferrobacillus ferrooxidans (strain ATCC 23270)).